Consider the following 490-residue polypeptide: Xylulose kinase (490 aa).

Positions 99, 170, 280, and 281 each coordinate substrate. ATP is bound by residues Trp355, 441–442 (GA), and Asn445.

This sequence belongs to the FGGY kinase family. As to quaternary structure, monomer.

It catalyses the reaction D-xylulose + ATP = D-xylulose 5-phosphate + ADP + H(+). Phosphorylates D-xylulose to produce D-xylulose 5-phosphate, a molecule that may play an important role in the regulation of glucose metabolism and lipogenesis. The chain is Xylulose kinase (XYLB) from Bos taurus (Bovine).